We begin with the raw amino-acid sequence, 492 residues long: Bifunctional purine biosynthesis protein PurH (492 aa).

Residues 1 to 144 (MKKAILSVSN…KNYKHVTTIV (144 aa)) enclose the MGS-like domain.

The protein belongs to the PurH family.

The enzyme catalyses (6R)-10-formyltetrahydrofolate + 5-amino-1-(5-phospho-beta-D-ribosyl)imidazole-4-carboxamide = 5-formamido-1-(5-phospho-D-ribosyl)imidazole-4-carboxamide + (6S)-5,6,7,8-tetrahydrofolate. It carries out the reaction IMP + H2O = 5-formamido-1-(5-phospho-D-ribosyl)imidazole-4-carboxamide. Its pathway is purine metabolism; IMP biosynthesis via de novo pathway; 5-formamido-1-(5-phospho-D-ribosyl)imidazole-4-carboxamide from 5-amino-1-(5-phospho-D-ribosyl)imidazole-4-carboxamide (10-formyl THF route): step 1/1. The protein operates within purine metabolism; IMP biosynthesis via de novo pathway; IMP from 5-formamido-1-(5-phospho-D-ribosyl)imidazole-4-carboxamide: step 1/1. The sequence is that of Bifunctional purine biosynthesis protein PurH from Staphylococcus aureus (strain JH1).